A 380-amino-acid polypeptide reads, in one-letter code: Queuine tRNA-ribosyltransferase (380 aa).

The active-site Proton acceptor is D93. Substrate-binding positions include 93 to 97 (DSGGF), D147, Q198, and G225. Residues 256 to 262 (GVGLPSN) are RNA binding. D275 serves as the catalytic Nucleophile. Positions 280-284 (ARNGR) are RNA binding; important for wobble base 34 recognition. Zn(2+)-binding residues include C313, C315, C318, and H344.

The protein belongs to the queuine tRNA-ribosyltransferase family. As to quaternary structure, homodimer. Within each dimer, one monomer is responsible for RNA recognition and catalysis, while the other monomer binds to the replacement base PreQ1. Zn(2+) serves as cofactor.

The catalysed reaction is 7-aminomethyl-7-carbaguanine + guanosine(34) in tRNA = 7-aminomethyl-7-carbaguanosine(34) in tRNA + guanine. It functions in the pathway tRNA modification; tRNA-queuosine biosynthesis. In terms of biological role, catalyzes the base-exchange of a guanine (G) residue with the queuine precursor 7-aminomethyl-7-deazaguanine (PreQ1) at position 34 (anticodon wobble position) in tRNAs with GU(N) anticodons (tRNA-Asp, -Asn, -His and -Tyr). Catalysis occurs through a double-displacement mechanism. The nucleophile active site attacks the C1' of nucleotide 34 to detach the guanine base from the RNA, forming a covalent enzyme-RNA intermediate. The proton acceptor active site deprotonates the incoming PreQ1, allowing a nucleophilic attack on the C1' of the ribose to form the product. After dissociation, two additional enzymatic reactions on the tRNA convert PreQ1 to queuine (Q), resulting in the hypermodified nucleoside queuosine (7-(((4,5-cis-dihydroxy-2-cyclopenten-1-yl)amino)methyl)-7-deazaguanosine). The chain is Queuine tRNA-ribosyltransferase from Clostridium perfringens (strain ATCC 13124 / DSM 756 / JCM 1290 / NCIMB 6125 / NCTC 8237 / Type A).